The primary structure comprises 166 residues: Peptidyl-prolyl cis-trans isomerase cyp18 (166 aa).

Residues 2–164 (STVELNTSAG…QPVVIESAKI (163 aa)) enclose the PPIase cyclophilin-type domain.

This sequence belongs to the cyclophilin-type PPIase family. In terms of assembly, monomer.

It is found in the cytoplasm. It catalyses the reaction [protein]-peptidylproline (omega=180) = [protein]-peptidylproline (omega=0). Inhibition by cyclosporin A with a Ki of 21 mu-mol. Its function is as follows. PPIases accelerate the folding of proteins. It catalyzes the cis-trans isomerization of proline imidic peptide bonds in oligopeptides. The chain is Peptidyl-prolyl cis-trans isomerase cyp18 from Streptomyces antibioticus.